The following is a 1364-amino-acid chain: Kinectin (1364 aa).

The Cytoplasmic portion of the chain corresponds to 1–6 (MEFYES). Residues 7 to 29 (TYFIILIPSVVITVIFLFFWLFM) form a helical; Signal-anchor for type II membrane protein membrane-spanning segment. At 30-1364 (KETLYDEVLA…KGREHYQLVE (1335 aa)) the chain is on the lumenal side. 4 stretches are compositionally biased toward basic and acidic residues: residues 46-56 (KFPPTKSDKKK), 73-86 (HESD…DFKL), 121-135 (QKAA…ESEG), and 170-179 (QKNDDQDTKT). Residues 46 to 207 (KFPPTKSDKK…VKQENVSGKK (162 aa)) are disordered. Asparagine 202, asparagine 267, asparagine 623, asparagine 638, asparagine 704, asparagine 775, asparagine 976, asparagine 1061, asparagine 1088, and asparagine 1094 each carry an N-linked (GlcNAc...) asparagine glycan. Residues 315 to 1085 (KASKAESAAA…VETRELLQKL (771 aa)) are a coiled coil. Positions 1116–1306 (SGSEDIKVME…ASLEREIGKV (191 aa)) form a coiled coil.

The protein belongs to the kinectin family. As to quaternary structure, parallel homodimers formed between the membrane-bound and the cytosolic form, and also between 2 cytosolic forms. In terms of processing, both the membrane and cytoplasmic forms seem to be myristoylated.

The protein localises to the endoplasmic reticulum membrane. Receptor for kinesin thus involved in kinesin-driven vesicle motility. The protein is Kinectin (KTN1) of Gallus gallus (Chicken).